The following is a 339-amino-acid chain: Serine/threonine-protein kinase pdik1l-A (339 aa).

Residues 8-332 (YDLIREVGRG…LELKLIQIAF (325 aa)) form the Protein kinase domain. ATP-binding positions include 14-22 (VGRGSYGVV) and lysine 37. Aspartate 164 (proton acceptor) is an active-site residue.

It belongs to the protein kinase superfamily. Ser/Thr protein kinase family.

The protein localises to the nucleus. The catalysed reaction is L-seryl-[protein] + ATP = O-phospho-L-seryl-[protein] + ADP + H(+). The enzyme catalyses L-threonyl-[protein] + ATP = O-phospho-L-threonyl-[protein] + ADP + H(+). The protein is Serine/threonine-protein kinase pdik1l-A (pdik1-a) of Xenopus laevis (African clawed frog).